The sequence spans 576 residues: Proton pump-interactor 3B (576 aa).

A disordered region spans residues 34–63 (SEVTTDEEEDTIFSGGDSSSGLAAEEDSSG). Coiled-coil stretches lie at residues 132 to 155 (RMVI…LRCT) and 205 to 241 (EKEA…SDKL). Positions 369-381 (RSEKVHKMNREDS) are enriched in basic and acidic residues. Positions 369 to 395 (RSEKVHKMNREDSSSNSSEDGNVITDK) are disordered. The stretch at 411–467 (KKKEEEIDEEALKERKREEQLEKARLVMERKRKLQEKAAAKAAIRAQKEAEKKLKAI) forms a coiled coil. Residues 555-575 (WVWGLSSAALAVSLVLVVLLL) traverse the membrane as a helical segment.

It belongs to the plant Proton pump-interactor protein family.

The protein localises to the cell membrane. The protein resides in the endoplasmic reticulum membrane. In terms of biological role, may regulate plasma membrane ATPase activity. The protein is Proton pump-interactor 3B (PPI3B) of Arabidopsis thaliana (Mouse-ear cress).